Consider the following 316-residue polypeptide: Cuticle collagen 12 (316 aa).

An N-terminal signal peptide occupies residues 1-36 (MTEDPKQIAQETESLRKVAFFGIAVSTIATLTAIIA). Composition is skewed to low complexity over residues 127 to 157 (SGAA…PGQD) and 183 to 204 (APGQ…GAAL). The tract at residues 127–316 (SGAAGPAGSP…CPPPRTAPGY (190 aa)) is disordered. Triple-helical region stretches follow at residues 128 to 157 (GAAG…PGQD), 176 to 202 (GPPG…SGGA), 206 to 235 (GPPG…PGQV), 240 to 266 (GTPG…AGSS), and 269 to 304 (GGPG…EGAC). Positions 205–217 (PGPPGPAGPPGPA) are enriched in pro residues. Residues 219–234 (QPGSNGNAGAPGAPGQ) are compositionally biased toward low complexity. Pro residues predominate over residues 241–251 (TPGPAGPPGSP). 2 stretches are compositionally biased toward low complexity: residues 256 to 266 (APGQPGQAGSS) and 276 to 295 (DAGA…PGQD). Over residues 307–316 (CPPPRTAPGY) the composition is skewed to pro residues.

The protein belongs to the cuticular collagen family. In terms of assembly, collagen polypeptide chains are complexed within the cuticle by disulfide bonds and other types of covalent cross-links.

In terms of biological role, nematode cuticles are composed largely of collagen-like proteins. The cuticle functions both as an exoskeleton and as a barrier to protect the worm from its environment. This chain is Cuticle collagen 12 (col-12), found in Caenorhabditis elegans.